The primary structure comprises 27 residues: Carcinustatin-20 (27 aa).

At Leu27 the chain carries Leucine amide.

Belongs to the allatostatin family.

The protein resides in the secreted. May act as a neurotransmitter or neuromodulator. This Carcinus maenas (Common shore crab) protein is Carcinustatin-20.